Consider the following 344-residue polypeptide: Golgi-associated RAB2 interactor protein 1B (344 aa).

The protein belongs to the GARIN family.

The protein resides in the golgi apparatus. Functionally, RAB2B effector protein required for accurate acrosome formation and normal male fertility. In complex with RAB2A/RAB2B, seems to suppress excessive vesicle trafficking during acrosome formation. The protein is Golgi-associated RAB2 interactor protein 1B (Garin1b) of Rattus norvegicus (Rat).